The sequence spans 356 residues: UDP-N-acetylglucosamine--N-acetylmuramyl-(pentapeptide) pyrophosphoryl-undecaprenol N-acetylglucosamine transferase (356 aa).

Residues Ser195 and Gln287 each contribute to the UDP-N-acetyl-alpha-D-glucosamine site.

The protein belongs to the glycosyltransferase 28 family. MurG subfamily.

The protein resides in the cell membrane. The catalysed reaction is Mur2Ac(oyl-L-Ala-gamma-D-Glu-L-Lys-D-Ala-D-Ala)-di-trans,octa-cis-undecaprenyl diphosphate + UDP-N-acetyl-alpha-D-glucosamine = beta-D-GlcNAc-(1-&gt;4)-Mur2Ac(oyl-L-Ala-gamma-D-Glu-L-Lys-D-Ala-D-Ala)-di-trans,octa-cis-undecaprenyl diphosphate + UDP + H(+). It functions in the pathway cell wall biogenesis; peptidoglycan biosynthesis. In terms of biological role, cell wall formation. Catalyzes the transfer of a GlcNAc subunit on undecaprenyl-pyrophosphoryl-MurNAc-pentapeptide (lipid intermediate I) to form undecaprenyl-pyrophosphoryl-MurNAc-(pentapeptide)GlcNAc (lipid intermediate II). This Streptococcus gordonii (strain Challis / ATCC 35105 / BCRC 15272 / CH1 / DL1 / V288) protein is UDP-N-acetylglucosamine--N-acetylmuramyl-(pentapeptide) pyrophosphoryl-undecaprenol N-acetylglucosamine transferase.